The following is a 440-amino-acid chain: tRNA-2-methylthio-N(6)-dimethylallyladenosine synthase (440 aa).

The MTTase N-terminal domain maps to 4–120 (NYVYIETFGC…LNDMVLAAER (117 aa)). Cysteine 13, cysteine 49, cysteine 83, cysteine 158, cysteine 162, and cysteine 165 together coordinate [4Fe-4S] cluster. The Radical SAM core domain maps to 144–374 (GTARISSFVT…QALQKRTTME (231 aa)). One can recognise a TRAM domain in the interval 377–439 (DVLLGTRQTV…QNSLLGELLP (63 aa)).

This sequence belongs to the methylthiotransferase family. MiaB subfamily. As to quaternary structure, monomer. [4Fe-4S] cluster is required as a cofactor.

It is found in the cytoplasm. The enzyme catalyses N(6)-dimethylallyladenosine(37) in tRNA + (sulfur carrier)-SH + AH2 + 2 S-adenosyl-L-methionine = 2-methylsulfanyl-N(6)-dimethylallyladenosine(37) in tRNA + (sulfur carrier)-H + 5'-deoxyadenosine + L-methionine + A + S-adenosyl-L-homocysteine + 2 H(+). Functionally, catalyzes the methylthiolation of N6-(dimethylallyl)adenosine (i(6)A), leading to the formation of 2-methylthio-N6-(dimethylallyl)adenosine (ms(2)i(6)A) at position 37 in tRNAs that read codons beginning with uridine. The polypeptide is tRNA-2-methylthio-N(6)-dimethylallyladenosine synthase (Pelobacter propionicus (strain DSM 2379 / NBRC 103807 / OttBd1)).